The chain runs to 879 residues: Phosphoenolpyruvate carboxylase (879 aa).

Catalysis depends on residues His-137 and Lys-545.

Belongs to the PEPCase type 1 family. Mg(2+) is required as a cofactor.

It carries out the reaction oxaloacetate + phosphate = phosphoenolpyruvate + hydrogencarbonate. Forms oxaloacetate, a four-carbon dicarboxylic acid source for the tricarboxylic acid cycle. This chain is Phosphoenolpyruvate carboxylase, found in Yersinia enterocolitica serotype O:8 / biotype 1B (strain NCTC 13174 / 8081).